We begin with the raw amino-acid sequence, 279 residues long: Phosphonates import ATP-binding protein PhnC (279 aa).

In terms of domain architecture, ABC transporter spans 2 to 245 (FQLKNVTRQF…AVAAIYGAET (244 aa)). Residue 34–41 (GRSGAGKS) coordinates ATP.

It belongs to the ABC transporter superfamily. Phosphonates importer (TC 3.A.1.9.1) family. The complex is composed of two ATP-binding proteins (PhnC), two transmembrane proteins (PhnE) and a solute-binding protein (PhnD).

The protein resides in the cell inner membrane. It carries out the reaction phosphonate(out) + ATP + H2O = phosphonate(in) + ADP + phosphate + H(+). Its function is as follows. Part of the ABC transporter complex PhnCDE involved in phosphonates import. Responsible for energy coupling to the transport system. The polypeptide is Phosphonates import ATP-binding protein PhnC (Rhizobium meliloti (strain 1021) (Ensifer meliloti)).